We begin with the raw amino-acid sequence, 208 residues long: uncharacterized protein (208 aa).

A signal peptide spans 1–34 (MPSHCRERLPFALHFFAVAYGASLWILGSHGLAA).

This is an uncharacterized protein from Sinorhizobium fredii (strain NBRC 101917 / NGR234).